Consider the following 783-residue polypeptide: Centrosomal protein of 89 kDa (783 aa).

A disordered region spans residues 28-49; sequence PKAAVPRTPPPRSPNPSPERPR. Over residues 34 to 45 the composition is skewed to pro residues; that stretch reads RTPPPRSPNPSP. At S50 the chain carries Phosphoserine. Disordered regions lie at residues 63–157 and 176–226; these read GRTV…DDLY and DENI…DITG. The segment covering 94–107 has biased composition (polar residues); the sequence is ATTSQLRPRPNWQS. Composition is skewed to basic and acidic residues over residues 139–155 and 196–214; these read ELGDVSAREDRGGHSDD and QQKDGKHPVLNLKDEKPPL. Coiled-coil stretches lie at residues 234–333 and 369–719; these read EITR…SRYQ and LLLA…GELE.

The protein resides in the cytoplasm. The protein localises to the cytosol. Its subcellular location is the cytoskeleton. It is found in the microtubule organizing center. It localises to the centrosome. The protein resides in the spindle pole. The protein localises to the centriole. Its subcellular location is the mitochondrion intermembrane space. Its function is as follows. Required for ciliogenesis. Also plays a role in mitochondrial metabolism where it may modulate complex IV activity. This chain is Centrosomal protein of 89 kDa (CEP89), found in Homo sapiens (Human).